A 621-amino-acid chain; its full sequence is DnaJ homolog subfamily C member 2 (621 aa).

Met-1 is modified (N-acetylmethionine). The epitope (recognized by CD8(+) cytotoxic T-lymphocytes) stretch occupies residues Ser-23–Val-31. Phosphoserine occurs at positions 47, 49, 60, and 63. The J domain maps to Asp-88–Asp-161. Residues Val-160–Gln-250 are ZRF1-UBD. Disordered stretches follow at residues Glu-294–Ala-315 and Lys-426–Asn-453. 2 SANT domains span residues Asn-449–Pro-511 and Thr-549–Lys-604.

As to quaternary structure, component of ribosome-associated complex (RAC), a heterodimer composed of Hsp70/DnaK-type chaperone HSPA14 and Hsp40/DnaJ-type chaperone DNAJC2. Interacts (via ZRF1-UBD region) with ID1. Post-translationally, phosphorylated in M (mitotic) phase. As to expression, widely expressed.

The protein localises to the nucleus. It localises to the cytoplasm. Its subcellular location is the cytosol. In terms of biological role, acts both as a chaperone in the cytosol and as a chromatin regulator in the nucleus. When cytosolic, acts as a molecular chaperone: component of the ribosome-associated complex (RAC), a complex involved in folding or maintaining nascent polypeptides in a folding-competent state. In the RAC complex, stimulates the ATPase activity of the ribosome-associated pool of Hsp70-type chaperones HSPA14 that bind to the nascent polypeptide chain. When nuclear, mediates the switching from polycomb-repressed genes to an active state: specifically recruited at histone H2A ubiquitinated at 'Lys-119' (H2AK119ub), and promotes the displacement of the polycomb PRC1 complex from chromatin, thereby facilitating transcription activation. In Homo sapiens (Human), this protein is DnaJ homolog subfamily C member 2 (DNAJC2).